Here is an 891-residue protein sequence, read N- to C-terminus: MSSTLREASKDTLQAKDKTYHYYSLPLAAKSLGDIARLPKSLKVLLENLLRWQDGESVTDEDIQALAGWLKNAHADREIAWRPARVLMQDFTGVPAVVDLAAMREAVKRLGGDTSKVNPLSPVDLVIDHSVTVDHFGDDDAFEENVRLEMERNHERYMFLKWGKQAFSRFSVVPPGTGICHQVNLEYLGKAVWSELQDGEWIAYPDSLVGTDSHTTMINGLGVLGWGVGGIEAEAAMLGQPVSMLIPDVVGFKLTGKLREGITATDLVLTVTQMLRKHGVVGKFVEFYGDGLDSLPLADRATIANMSPEYGATCGFFPIDAITLEYMRLSGRSDDLVELVETYAKAQGMWRNPGDEPVFTSTLELDMGDVEASLAGPKRPQDRVALGDVPKAFAASAELELNTAQRDRQPVDYTMNGQPYQLPDGAVVIAAITSCTNTSNPSVLMAAGLLAKKAVTLGLKRQPWVKASLAPGSKVVSDYLAQAKLTPYLDELGFNLVGYGCTTCIGNSGPLPEPIETAIKKGDLTVGAVLSGNRNFEGRIHPLVKTNWLASPPLVVAYALAGNMNINLATDPLGYDRKGDPVYLKDIWPSAQEIARAVELVSSDMFRKEYAEVFEGTEEWKSIQVESSDTYGWQSDSTYIRLSPFFDEMQAQPAPVKDIHGARILAMLGDSVTTDHISPAGSIKPDSPAGRYLQNHGVERKDFNSYGSRRGNHEVMMRGTFANIRIRNEMLPGVEGGMTRHLPGTEAMSIYDAAMLYQQEKTPLAVIAGKEYGSGSSRDWAAKGPRLLGIRVVIAESFERIHRSNLIGMGILPLEFPQGVTRKTLGLTGEEVIDIADLQNLRPGATIPVTLTRSDGSKETVPCRCRIDTATELTYYQNDGILHYVIRNMLN.

3 residues coordinate [4Fe-4S] cluster: C435, C501, and C504.

It belongs to the aconitase/IPM isomerase family. As to quaternary structure, monomer. Requires [4Fe-4S] cluster as cofactor.

The catalysed reaction is citrate = D-threo-isocitrate. The enzyme catalyses (2S,3R)-3-hydroxybutane-1,2,3-tricarboxylate = 2-methyl-cis-aconitate + H2O. The protein operates within carbohydrate metabolism; tricarboxylic acid cycle; isocitrate from oxaloacetate: step 2/2. Its pathway is organic acid metabolism; propanoate degradation. Functionally, involved in the catabolism of short chain fatty acids (SCFA) via the tricarboxylic acid (TCA)(acetyl degradation route) and the 2-methylcitrate cycle I (propionate degradation route). Catalyzes the reversible isomerization of citrate to isocitrate via cis-aconitate. Also catalyzes the hydration of 2-methyl-cis-aconitate to yield (2R,3S)-2-methylisocitrate. The (2S,3S)-2-methylcitrate (2-MC) is a very poor substrate. The apo form of AcnA functions as a RNA-binding regulatory protein. This is Aconitate hydratase A (acnA) from Salmonella typhimurium (strain LT2 / SGSC1412 / ATCC 700720).